The following is a 37-amino-acid chain: Gene 40 protein (37 aa).

The chain is Gene 40 protein (40) from Mycobacterium phage L5 (Mycobacteriophage L5).